The chain runs to 310 residues: N-acetyl-gamma-glutamyl-phosphate reductase (310 aa).

Residue cysteine 117 is part of the active site.

This sequence belongs to the NAGSA dehydrogenase family. Type 2 subfamily.

It is found in the cytoplasm. It carries out the reaction N-acetyl-L-glutamate 5-semialdehyde + phosphate + NADP(+) = N-acetyl-L-glutamyl 5-phosphate + NADPH + H(+). It functions in the pathway amino-acid biosynthesis; L-arginine biosynthesis; N(2)-acetyl-L-ornithine from L-glutamate: step 3/4. In terms of biological role, catalyzes the NADPH-dependent reduction of N-acetyl-5-glutamyl phosphate to yield N-acetyl-L-glutamate 5-semialdehyde. The sequence is that of N-acetyl-gamma-glutamyl-phosphate reductase from Rhizobium etli (strain ATCC 51251 / DSM 11541 / JCM 21823 / NBRC 15573 / CFN 42).